Consider the following 497-residue polypeptide: Lysine--tRNA ligase (497 aa).

2 residues coordinate Mg(2+): Glu409 and Glu416.

Belongs to the class-II aminoacyl-tRNA synthetase family. As to quaternary structure, homodimer. Mg(2+) serves as cofactor.

It is found in the cytoplasm. The catalysed reaction is tRNA(Lys) + L-lysine + ATP = L-lysyl-tRNA(Lys) + AMP + diphosphate. The sequence is that of Lysine--tRNA ligase from Streptococcus pyogenes serotype M49 (strain NZ131).